Reading from the N-terminus, the 392-residue chain is MCISSSSLLCGINSLKYASNRVGILIPPFQTASSLNIFRPYVIFSRSHRSLSSVDVSSPSLPLREHLPLKNVYSQVPLLPVWSPIPKGPRRFLLPPKFHYRLSPPPGEFKSSPRVAIMVAVIVCLVNGVVFWHWDLARDEAIRLHDFKRFRFMMTHAQASLFNLYEGRWWTLVVSIFSHQNLAHLLVNCVAIYSFLSIVVYKFGVWKALSVYLGAGVFGNYVALQRMMNEENPFATLPNGPTKVWDLLFPKGPYPPISRPALYLGSNPEYGPIIRTATFVPQSWATGLLGASGAVYATAAIFACLFPYTEFFLFFVYPVKAGIFMPLDFIAEYVLCLLNYEKKFHVAFDAHVSGTFFGVVSSLFLLPAMWKRRSLYCVGIVKKRIWSNKAKA.

The N-terminal 34 residues, 1 to 34 (MCISSSSLLCGINSLKYASNRVGILIPPFQTASS), are a transit peptide targeting the mitochondrion. A run of 8 helical transmembrane segments spans residues 115–135 (VAIM…WHWD), 150–172 (FRFM…WWTL), 185–205 (LLVN…KFGV), 208–225 (ALSV…VALQ), 277–297 (ATFV…AVYA), 299–319 (AAIF…VYPV), 321–341 (AGIF…LNYE), and 350–370 (AHVS…PAMW). The active-site Nucleophile is the S292. H351 is an active-site residue.

This sequence belongs to the peptidase S54 family.

It is found in the mitochondrion inner membrane. This is an uncharacterized protein from Schizosaccharomyces pombe (strain 972 / ATCC 24843) (Fission yeast).